The chain runs to 119 residues: Large ribosomal subunit protein uL24 (119 aa).

The protein belongs to the universal ribosomal protein uL24 family. As to quaternary structure, part of the 50S ribosomal subunit.

Its function is as follows. One of two assembly initiator proteins, it binds directly to the 5'-end of the 23S rRNA, where it nucleates assembly of the 50S subunit. Located at the polypeptide exit tunnel on the outside of the subunit. In Saccharolobus solfataricus (strain ATCC 35092 / DSM 1617 / JCM 11322 / P2) (Sulfolobus solfataricus), this protein is Large ribosomal subunit protein uL24.